Here is a 606-residue protein sequence, read N- to C-terminus: RUN and FYVE domain-containing protein 2 (606 aa).

One can recognise an RUN domain in the interval 37–169; the sequence is DSDYPPLQQF…IDANLCVKGE (133 aa). Positions 210-534 form a coiled coil; sequence EELNRQLNST…IKEANKALQG (325 aa). The segment at 540 to 598 adopts an FYVE-type zinc-finger fold; that stretch reads DKEATHCKLCEKEFSLSKRKHHCRNCGEIFCNACSDNELPLPSSPKPVRVCDSCHALLI. C546, C549, C562, C565, C570, C573, C590, and C593 together coordinate Zn(2+).

Interacts with BMX.

Its subcellular location is the nucleus. This chain is RUN and FYVE domain-containing protein 2 (RUFY2), found in Pongo abelii (Sumatran orangutan).